Here is a 321-residue protein sequence, read N- to C-terminus: Sideroflexin-3 (321 aa).

N-acetylmethionine is present on Met-1. Helical transmembrane passes span 146-164 (LGTA…ALGL), 174-194 (LVGR…NIPL), 225-245 (IFQV…IPPV), and 266-286 (LQVG…CALF).

This sequence belongs to the sideroflexin family. In terms of tissue distribution, widely expressed.

The protein resides in the mitochondrion membrane. It carries out the reaction L-serine(in) = L-serine(out). In terms of biological role, mitochondrial serine transporter that mediates transport of serine into mitochondria, an important step of the one-carbon metabolism pathway. Mitochondrial serine is converted to glycine and formate, which then exits to the cytosol where it is used to generate the charged folates that serve as one-carbon donors. The sequence is that of Sideroflexin-3 from Mus musculus (Mouse).